The following is a 452-amino-acid chain: MQKGAKIEDEGRQSRIQSRNFIIQRSDPRTRGSSVYSSRSSSYNVRSSISPGVYQQLSSSGITDFKGNREKEKREMQNLNERLASYIEKVHFLDAQVKKLEAENEALRNRKVEDLQPIRDAYENELRQARKVIDELASSKGVAEGKLAGLQDEIGSLRELIVTYESQAKDYRKKIDSLGNQLGEFEGELQSLRLRVGSLEDENAKLRELLEKVQEQNRRLRADLDTETAAHIEADCLAQTKTEEAEFYRDLLDQLELLKPEPIQIKGMDYADFWKSELAKCVREINLAYDEKIDLIQQDCEAKYASQINQLRSGNVKDGMQLQHSQEEVKKLRGQLQDKNAAYAELATRIASLQAERDELARQLADIERELEEQKLKYNRDVGDLESELTSVLAQLQHLMDAKMSLELEIACYKKLLEGEESRVGLRTLVEQAIGTQSKGSASLKDAIQSSS.

Residues 1–13 are compositionally biased toward basic and acidic residues; that stretch reads MQKGAKIEDEGRQ. The disordered stretch occupies residues 1–50; sequence MQKGAKIEDEGRQSRIQSRNFIIQRSDPRTRGSSVYSSRSSSYNVRSSIS. The segment at 1 to 75 is head; sequence MQKGAKIEDE…KGNREKEKRE (75 aa). The span at 14-23 shows a compositional bias: polar residues; that stretch reads SRIQSRNFII. Residues 33–50 are compositionally biased toward low complexity; that stretch reads SSVYSSRSSSYNVRSSIS. The 353-residue stretch at 72 to 424 folds into the IF rod domain; sequence EKREMQNLNE…KLLEGEESRV (353 aa). Residues 76-111 are coil 1A; that stretch reads MQNLNERLASYIEKVHFLDAQVKKLEAENEALRNRK. A linker 1 region spans residues 112-121; it reads VEDLQPIRDA. The segment at 122–259 is coil 1B; it reads YENELRQARK…DLLDQLELLK (138 aa). Serine 156 carries the sulfoserine modification. Residues 260-278 form a linker 12 region; it reads PEPIQIKGMDYADFWKSEL. A coil 2 region spans residues 279–424; sequence AKCVREINLA…KLLEGEESRV (146 aa). The tail stretch occupies residues 425–452; the sequence is GLRTLVEQAIGTQSKGSASLKDAIQSSS.

Belongs to the intermediate filament family.

This chain is Retrograde protein of 51 kDa (RGP51), found in Lymnaea stagnalis (Great pond snail).